The chain runs to 1256 residues: Protein flightless-1 (1256 aa).

LRR repeat units lie at residues 4 to 28 (LPFV…MRQM), 29 to 51 (SRVQ…LGHL), 52 to 74 (QKLE…LTEL), 75 to 99 (SCLR…LFHL), 100 to 122 (EELT…LERA), 124 to 145 (NLIV…LFIH), 147 to 169 (TDLL…TRRL), 171 to 192 (NLKT…QLPS), 218 to 241 (LANL…VYNV), 243 to 264 (TLVR…VELW), 265 to 287 (QRLE…LCKL), 289 to 312 (KLRR…IGKL), 313 to 335 (GALE…LCRC), 336 to 358 (GALK…IHLL), and 360 to 381 (GLDQ…PSEA). The segment at 405-476 (AAVPPSMPSS…ESLKPKRWDE (72 aa)) is disordered. Basic and acidic residues predominate over residues 431–476 (PRSEGDQDAAKVLKGMKDVAKDKDNEAGAVPEDGKPESLKPKRWDE). Gelsolin-like repeat units follow at residues 512 to 589 (IEEV…EQFL), 633 to 703 (EPVA…AEFW), 749 to 822 (VELP…MQIF), and 1168 to 1242 (EKCA…SRRF).

This sequence belongs to the villin/gelsolin family. Found in ovaries, larval fat bodies, brain and adult thorax.

Its function is as follows. May play a key role in embryonic cellularization by interacting with both the cytoskeleton and other cellular components. Alternatively, it may play a structural role in indirect flight muscle. Vital for embryonic development. The chain is Protein flightless-1 (fliI) from Drosophila melanogaster (Fruit fly).